Here is a 98-residue protein sequence, read N- to C-terminus: Prostate and testis expressed protein 3 (98 aa).

The first 20 residues, 1 to 20 (MNKHFLLLFSLFYFIVEATS), serve as a signal peptide directing secretion. Residues 21 to 97 (LKCVTCHLRT…CCNSDFCNFR (77 aa)) form the UPAR/Ly6 domain. Intrachain disulfides connect C23-C50, C26-C35, C42-C68, and C72-C88.

It belongs to the PATE family.

The protein resides in the secreted. The chain is Prostate and testis expressed protein 3 (Pate3) from Mus musculus (Mouse).